Reading from the N-terminus, the 435-residue chain is Glutamate-1-semialdehyde 2,1-aminomutase (435 aa).

Lys-266 carries the N6-(pyridoxal phosphate)lysine modification.

It belongs to the class-III pyridoxal-phosphate-dependent aminotransferase family. HemL subfamily. Homodimer. It depends on pyridoxal 5'-phosphate as a cofactor.

Its subcellular location is the cytoplasm. The catalysed reaction is (S)-4-amino-5-oxopentanoate = 5-aminolevulinate. It participates in porphyrin-containing compound metabolism; protoporphyrin-IX biosynthesis; 5-aminolevulinate from L-glutamyl-tRNA(Glu): step 2/2. This chain is Glutamate-1-semialdehyde 2,1-aminomutase, found in Coxiella burnetii (strain Dugway 5J108-111).